Here is a 116-residue protein sequence, read N- to C-terminus: Probable transcriptional regulator WhiB6 (116 aa).

[4Fe-4S] cluster is bound by residues Cys-12, Cys-53, Cys-56, and Cys-62. A 4Fe-4S Wbl-type domain is found at 33 to 86; it reads VCTQDPDRWTTTPDDEAKTLCRACPRRWLCARDAVESAGAEGLWAGVVIPESGR.

It belongs to the WhiB family. Requires [4Fe-4S] cluster as cofactor. The Fe-S cluster can be nitrosylated by nitric oxide (NO). In terms of processing, upon Fe-S cluster removal intramolecular disulfide bonds are formed.

It is found in the cytoplasm. Functionally, acts as a transcriptional regulator. Probably redox-responsive. The apo- but not holo-form probably binds DNA. This is Probable transcriptional regulator WhiB6 (whiB6) from Mycobacterium tuberculosis (strain CDC 1551 / Oshkosh).